The following is a 130-amino-acid chain: Small ribosomal subunit protein uS9 (130 aa).

This sequence belongs to the universal ribosomal protein uS9 family.

This is Small ribosomal subunit protein uS9 from Streptococcus suis (strain 98HAH33).